Here is a 234-residue protein sequence, read N- to C-terminus: Phosphoribosylaminoimidazole-succinocarboxamide synthase (234 aa).

It belongs to the SAICAR synthetase family.

It catalyses the reaction 5-amino-1-(5-phospho-D-ribosyl)imidazole-4-carboxylate + L-aspartate + ATP = (2S)-2-[5-amino-1-(5-phospho-beta-D-ribosyl)imidazole-4-carboxamido]succinate + ADP + phosphate + 2 H(+). It functions in the pathway purine metabolism; IMP biosynthesis via de novo pathway; 5-amino-1-(5-phospho-D-ribosyl)imidazole-4-carboxamide from 5-amino-1-(5-phospho-D-ribosyl)imidazole-4-carboxylate: step 1/2. This Sulfurisphaera tokodaii (strain DSM 16993 / JCM 10545 / NBRC 100140 / 7) (Sulfolobus tokodaii) protein is Phosphoribosylaminoimidazole-succinocarboxamide synthase.